The sequence spans 364 residues: Aminomethyltransferase (364 aa).

The protein belongs to the GcvT family. The glycine cleavage system is composed of four proteins: P, T, L and H.

It carries out the reaction N(6)-[(R)-S(8)-aminomethyldihydrolipoyl]-L-lysyl-[protein] + (6S)-5,6,7,8-tetrahydrofolate = N(6)-[(R)-dihydrolipoyl]-L-lysyl-[protein] + (6R)-5,10-methylene-5,6,7,8-tetrahydrofolate + NH4(+). Functionally, the glycine cleavage system catalyzes the degradation of glycine. The chain is Aminomethyltransferase from Shewanella baltica (strain OS223).